Reading from the N-terminus, the 423-residue chain is Serine hydroxymethyltransferase (423 aa).

Residues leucine 125 and 129–131 contribute to the (6S)-5,6,7,8-tetrahydrofolate site; that span reads GHL. Residue lysine 234 is modified to N6-(pyridoxal phosphate)lysine. Glutamate 249 is a (6S)-5,6,7,8-tetrahydrofolate binding site.

Belongs to the SHMT family. As to quaternary structure, homodimer. Pyridoxal 5'-phosphate serves as cofactor.

The protein resides in the cytoplasm. It catalyses the reaction (6R)-5,10-methylene-5,6,7,8-tetrahydrofolate + glycine + H2O = (6S)-5,6,7,8-tetrahydrofolate + L-serine. The protein operates within one-carbon metabolism; tetrahydrofolate interconversion. It functions in the pathway amino-acid biosynthesis; glycine biosynthesis; glycine from L-serine: step 1/1. Catalyzes the reversible interconversion of serine and glycine with tetrahydrofolate (THF) serving as the one-carbon carrier. This reaction serves as the major source of one-carbon groups required for the biosynthesis of purines, thymidylate, methionine, and other important biomolecules. Also exhibits THF-independent aldolase activity toward beta-hydroxyamino acids, producing glycine and aldehydes, via a retro-aldol mechanism. In Thermobifida fusca (strain YX), this protein is Serine hydroxymethyltransferase.